A 129-amino-acid chain; its full sequence is NADH-quinone oxidoreductase subunit 15 (129 aa).

It belongs to the complex I Nqo15 family. As to quaternary structure, NDH-1 is composed of 15 different subunits, Nqo1 to Nqo15. The complex has a L-shaped structure, with the hydrophobic arm (subunits Nqo7, Nqo8 and Nqo10 to Nqo14) embedded in the membrane and the hydrophilic peripheral arm (subunits Nqo1 to Nqo6, Nqo9 and Nqo15) protruding into the bacterial cytoplasm. The hydrophilic domain contains all the redox centers. Nqo15 is bound to the side of the complex near the N-terminus of Nqo3, where it interacts with subunits Nqo3, Nqo2, Nqo1, Nqo9 and Nqo4.

Its subcellular location is the cell membrane. It catalyses the reaction a quinone + NADH + 5 H(+)(in) = a quinol + NAD(+) + 4 H(+)(out). Its function is as follows. NDH-1 shuttles electrons from NADH, via FMN and iron-sulfur (Fe-S) centers, to quinones in the respiratory chain. The immediate electron acceptor for the enzyme in this species is menaquinone. Couples the redox reaction to proton translocation (for every two electrons transferred, four hydrogen ions are translocated across the cytoplasmic membrane), and thus conserves the redox energy in a proton gradient required for the synthesis of ATP. The Nqo15 subunit has probably a role in complex stabilization, and may be also involved in the storage of iron for iron-sulfur cluster regeneration in the complex. This is NADH-quinone oxidoreductase subunit 15 (nqo15) from Thermus thermophilus (strain ATCC 27634 / DSM 579 / HB8).